The primary structure comprises 277 residues: S-formylglutathione hydrolase FrmB (277 aa).

Catalysis depends on charge relay system residues Ser-145, Asp-221, and His-254.

This sequence belongs to the esterase D family.

The catalysed reaction is S-formylglutathione + H2O = formate + glutathione + H(+). Serine hydrolase involved in the detoxification of formaldehyde. Hydrolyzes S-formylglutathione to glutathione and formate. The protein is S-formylglutathione hydrolase FrmB (frmB) of Escherichia coli (strain ATCC 8739 / DSM 1576 / NBRC 3972 / NCIMB 8545 / WDCM 00012 / Crooks).